A 259-amino-acid polypeptide reads, in one-letter code: MPIVEDRLFRKIKKLTGKAIGDFNLIEEGDRIAVAVSGGKDSWTLLHILDSLRRRAPIRYELIAVNVDPGFPGYRTDIMEAHLREYGFANRMERTDCATIIKEKLRPGSSFCAFCARLRRGVLYSVATELGCNKLALGHHLDDFVETLLLNQFYVGTLAAMSPKLLADNGQHTVIRPMVYVEESDVAAFAEANGLPAIPCGCPEETRSDQNRQRMKRLVSQLAEDIPHLRSSLIGALGNVQPRHLLDASLKDFGTAAAD.

The PP-loop motif motif lies at 37-42 (SGGKDS). Residues Cys112, Cys115, and Cys202 each contribute to the [4Fe-4S] cluster site.

Belongs to the TtcA family. In terms of assembly, homodimer. Mg(2+) is required as a cofactor. The cofactor is [4Fe-4S] cluster.

Its subcellular location is the cytoplasm. It carries out the reaction cytidine(32) in tRNA + S-sulfanyl-L-cysteinyl-[cysteine desulfurase] + AH2 + ATP = 2-thiocytidine(32) in tRNA + L-cysteinyl-[cysteine desulfurase] + A + AMP + diphosphate + H(+). It participates in tRNA modification. In terms of biological role, catalyzes the ATP-dependent 2-thiolation of cytidine in position 32 of tRNA, to form 2-thiocytidine (s(2)C32). The sulfur atoms are provided by the cysteine/cysteine desulfurase (IscS) system. This chain is tRNA-cytidine(32) 2-sulfurtransferase, found in Syntrophotalea carbinolica (strain DSM 2380 / NBRC 103641 / GraBd1) (Pelobacter carbinolicus).